The sequence spans 469 residues: Glutamate--tRNA ligase (469 aa).

A 'HIGH' region motif is present at residues 11 to 21; sequence PSPTGFIHLGN. Residues 121-131 show a composition bias toward basic and acidic residues; that stretch reads PRYDGTWRPEP. Residues 121–141 form a disordered region; sequence PRYDGTWRPEPGKVLPEPPPG. The 'KMSKS' region motif lies at 243–247; that stretch reads KMSKR. Residue lysine 246 participates in ATP binding.

Belongs to the class-I aminoacyl-tRNA synthetase family. Glutamate--tRNA ligase type 1 subfamily. Monomer.

The protein localises to the cytoplasm. It carries out the reaction tRNA(Glu) + L-glutamate + ATP = L-glutamyl-tRNA(Glu) + AMP + diphosphate. Its function is as follows. Catalyzes the attachment of glutamate to tRNA(Glu) in a two-step reaction: glutamate is first activated by ATP to form Glu-AMP and then transferred to the acceptor end of tRNA(Glu). In Burkholderia multivorans (strain ATCC 17616 / 249), this protein is Glutamate--tRNA ligase.